The chain runs to 61 residues: Small ribosomal subunit protein uS14 (61 aa).

Zn(2+) contacts are provided by C24, C27, C40, and C43.

The protein belongs to the universal ribosomal protein uS14 family. Zinc-binding uS14 subfamily. As to quaternary structure, part of the 30S ribosomal subunit. Contacts proteins S3 and S10. The cofactor is Zn(2+).

Binds 16S rRNA, required for the assembly of 30S particles and may also be responsible for determining the conformation of the 16S rRNA at the A site. This Clostridioides difficile (strain 630) (Peptoclostridium difficile) protein is Small ribosomal subunit protein uS14.